Reading from the N-terminus, the 101-residue chain is Small ribosomal subunit protein uS14 (101 aa).

This sequence belongs to the universal ribosomal protein uS14 family. In terms of assembly, part of the 30S ribosomal subunit. Contacts proteins S3 and S10.

Its function is as follows. Binds 16S rRNA, required for the assembly of 30S particles and may also be responsible for determining the conformation of the 16S rRNA at the A site. The protein is Small ribosomal subunit protein uS14 of Aliivibrio fischeri (strain ATCC 700601 / ES114) (Vibrio fischeri).